The following is a 227-amino-acid chain: PKHD-type hydroxylase Bamb_4192 (227 aa).

The Fe2OG dioxygenase domain maps to 78–178; sequence KVFPPLFNRY…RVASFFWIQS (101 aa). Residues H96, D98, and H159 each contribute to the Fe cation site. R169 contacts 2-oxoglutarate.

Fe(2+) serves as cofactor. Requires L-ascorbate as cofactor.

In Burkholderia ambifaria (strain ATCC BAA-244 / DSM 16087 / CCUG 44356 / LMG 19182 / AMMD) (Burkholderia cepacia (strain AMMD)), this protein is PKHD-type hydroxylase Bamb_4192.